We begin with the raw amino-acid sequence, 665 residues long: DNA mismatch repair protein MutL (665 aa).

It belongs to the DNA mismatch repair MutL/HexB family.

Functionally, this protein is involved in the repair of mismatches in DNA. It is required for dam-dependent methyl-directed DNA mismatch repair. May act as a 'molecular matchmaker', a protein that promotes the formation of a stable complex between two or more DNA-binding proteins in an ATP-dependent manner without itself being part of a final effector complex. The polypeptide is DNA mismatch repair protein MutL (Acidobacterium capsulatum (strain ATCC 51196 / DSM 11244 / BCRC 80197 / JCM 7670 / NBRC 15755 / NCIMB 13165 / 161)).